The sequence spans 63 residues: Large ribosomal subunit protein uL30 (63 aa).

It belongs to the universal ribosomal protein uL30 family. Part of the 50S ribosomal subunit.

The chain is Large ribosomal subunit protein uL30 from Xanthomonas axonopodis pv. citri (strain 306).